We begin with the raw amino-acid sequence, 332 residues long: Ketol-acid reductoisomerase (NADP(+)) (332 aa).

Positions 1 to 182 (MAVIYYDKDC…GSNRAGILET (182 aa)) constitute a KARI N-terminal Rossmann domain. Residues 25 to 28 (YGAQ) and 83 to 86 (DTSQ) each bind NADP(+). The active site involves histidine 108. Glycine 134 serves as a coordination point for NADP(+). The 146-residue stretch at 183–328 (TFAEETETDL…AELRSMMSWL (146 aa)) folds into the KARI C-terminal knotted domain. Aspartate 191, glutamate 195, glutamate 227, and glutamate 231 together coordinate Mg(2+). Position 252 (serine 252) interacts with substrate.

Belongs to the ketol-acid reductoisomerase family. Mg(2+) serves as cofactor.

It catalyses the reaction (2R)-2,3-dihydroxy-3-methylbutanoate + NADP(+) = (2S)-2-acetolactate + NADPH + H(+). The catalysed reaction is (2R,3R)-2,3-dihydroxy-3-methylpentanoate + NADP(+) = (S)-2-ethyl-2-hydroxy-3-oxobutanoate + NADPH + H(+). Its pathway is amino-acid biosynthesis; L-isoleucine biosynthesis; L-isoleucine from 2-oxobutanoate: step 2/4. The protein operates within amino-acid biosynthesis; L-valine biosynthesis; L-valine from pyruvate: step 2/4. Functionally, involved in the biosynthesis of branched-chain amino acids (BCAA). Catalyzes an alkyl-migration followed by a ketol-acid reduction of (S)-2-acetolactate (S2AL) to yield (R)-2,3-dihydroxy-isovalerate. In the isomerase reaction, S2AL is rearranged via a Mg-dependent methyl migration to produce 3-hydroxy-3-methyl-2-ketobutyrate (HMKB). In the reductase reaction, this 2-ketoacid undergoes a metal-dependent reduction by NADPH to yield (R)-2,3-dihydroxy-isovalerate. This is Ketol-acid reductoisomerase (NADP(+)) from Dehalococcoides mccartyi (strain CBDB1).